The sequence spans 389 residues: MAFTGDELARMLQFKDKMISSAGSALRFEKVVQEAMASGIVLQHITCIKVRICDNSDILSDRQLRCLLINGLYPFEGRMSMFGVTEEWEGASAAPERQVVFLLSSTGQVLGYEDGVIFYLSPTFSDFWTTAMEFSCQNAILSNFIAQKSRDEYSDQFQKYFTRMRHTPISLTGVLPRRFQKVESGACVEEDARASMRPIQSDSFGAKGPFCWPTEELLQPSAKKDVGGTVCMALSCQEDNSARHCTIYGLTKTPGIKIMLSRHTQTDRSEAMCDAATQTEDVVDNSSETLFLGGNLVHQSILETEVQATAKNTFDVSDPRIDSVYDTTVVGAMATDDVGCKHVQGGASLAQEKPLKGYCIIATPSECKPNIHWLKSPENAVHESAAVLR.

Belongs to the beta-herpesvirinae UL38 protein family. Interacts with host MDM2; this interaction leads to the stabilization of host TP53.

The protein resides in the host cytoplasm. Its subcellular location is the host nucleus. In terms of biological role, plays a role in the inhibition of host apoptosis to facilitate efficient viral replication. Promotes stabilization and inactivation of host TP53 through interaction with host MDM2. This is Apoptosis inhibitor U19 (U19) from Homo sapiens (Human).